A 594-amino-acid polypeptide reads, in one-letter code: TOX high mobility group box family member 4-B (594 aa).

Disordered stretches follow at residues 160 to 225 (GTIL…PQKP) and 522 to 545 (ESPPPQMDVELVSSSPPPSLSPQC). Positions 207–217 (KPKTPKKKKKK) are enriched in basic residues. The short motif at 212–217 (KKKKKK) is the Nuclear localization signal element. The HMG box DNA-binding region spans 222 to 290 (PQKPLSAYAL…EYLKALALYK (69 aa)).

In terms of assembly, component of the PNUTS-PP1 phosphatase complex.

The protein localises to the nucleus. Its subcellular location is the chromosome. Transcription factor that modulates cell fate reprogramming from the somatic state to the pluripotent and neuronal fate. Also acts as a regulatory component of protein phosphatase 1 (PP1) complexes. Component of the PNUTS-PP1 protein phosphatase complex, a PP1 complex that regulates RNA polymerase II transcription pause-release. PNUTS-PP1 also plays a role in the control of chromatin structure and cell cycle progression during the transition from mitosis into interphase. The protein is TOX high mobility group box family member 4-B (tox4-b) of Xenopus laevis (African clawed frog).